A 735-amino-acid chain; its full sequence is Photosystem I P700 chlorophyll a apoprotein A2 (735 aa).

8 consecutive transmembrane segments (helical) span residues 47-70 (IFASHFGQLAIIFLWTSGNLFHVA), 136-159 (LYIGSIFLSFAATAFLFAGWLHLQ), 176-200 (LNHHLSGLFGVSSLAWTGHLIHVAI), 274-292 (MAHHHLAIAVLFIVAGHMY), 331-354 (LHFQLGLALASVGTICSLVAQHMY), 370-396 (ASLYTHHQYIAGFILCGAFAHGAIFFI), 418-440 (AIISHLSWVSLFLGFHTLGLYVH), and 518-536 (FLVHHAIALGLHTTTLILV). [4Fe-4S] cluster-binding residues include C560 and C569. The next 2 membrane-spanning stretches (helical) occupy residues 576 to 597 (AFYLAVFWMLNTIGWVTFYFHW) and 644 to 666 (LSVWSWMFLFGHLIYATGFMFLI). Chlorophyll a-binding residues include H655, M663, and Y671. A phylloquinone-binding site is contributed by W672. A helical transmembrane segment spans residues 708–728 (VVGLAHFSAGYILTYAAFLIA).

The protein belongs to the PsaA/PsaB family. The PsaA/B heterodimer binds the P700 chlorophyll special pair and subsequent electron acceptors. PSI consists of a core antenna complex that captures photons, and an electron transfer chain that converts photonic excitation into a charge separation. The eukaryotic PSI reaction center is composed of at least 11 subunits. The cofactor is P700 is a chlorophyll a/chlorophyll a' dimer, A0 is one or more chlorophyll a, A1 is one or both phylloquinones and FX is a shared 4Fe-4S iron-sulfur center..

The protein localises to the plastid. Its subcellular location is the chloroplast thylakoid membrane. The catalysed reaction is reduced [plastocyanin] + hnu + oxidized [2Fe-2S]-[ferredoxin] = oxidized [plastocyanin] + reduced [2Fe-2S]-[ferredoxin]. Its function is as follows. PsaA and PsaB bind P700, the primary electron donor of photosystem I (PSI), as well as the electron acceptors A0, A1 and FX. PSI is a plastocyanin/cytochrome c6-ferredoxin oxidoreductase, converting photonic excitation into a charge separation, which transfers an electron from the donor P700 chlorophyll pair to the spectroscopically characterized acceptors A0, A1, FX, FA and FB in turn. Oxidized P700 is reduced on the lumenal side of the thylakoid membrane by plastocyanin or cytochrome c6. The chain is Photosystem I P700 chlorophyll a apoprotein A2 from Tupiella akineta (Green alga).